The chain runs to 213 residues: Proteasome subunit beta 1 (213 aa).

Residues Met-1–Gly-18 constitute a propeptide, removed in mature form; by autocatalysis. Thr-19 functions as the Nucleophile in the catalytic mechanism.

Belongs to the peptidase T1B family. In terms of assembly, the 20S proteasome core is composed of 14 alpha and 14 beta subunits that assemble into four stacked heptameric rings, resulting in a barrel-shaped structure. The two inner rings, each composed of seven catalytic beta subunits, are sandwiched by two outer rings, each composed of seven alpha subunits. The catalytic chamber with the active sites is on the inside of the barrel. Has a gated structure, the ends of the cylinder being occluded by the N-termini of the alpha-subunits. Is capped at one or both ends by the proteasome regulatory ATPase, PAN.

The protein resides in the cytoplasm. The enzyme catalyses Cleavage of peptide bonds with very broad specificity.. With respect to regulation, the formation of the proteasomal ATPase PAN-20S proteasome complex, via the docking of the C-termini of PAN into the intersubunit pockets in the alpha-rings, triggers opening of the gate for substrate entry. Interconversion between the open-gate and close-gate conformations leads to a dynamic regulation of the 20S proteasome proteolysis activity. Its function is as follows. Component of the proteasome core, a large protease complex with broad specificity involved in protein degradation. This is Proteasome subunit beta 1 from Staphylothermus marinus (strain ATCC 43588 / DSM 3639 / JCM 9404 / F1).